Consider the following 829-residue polypeptide: Trimethylamine-N-oxide reductase (829 aa).

The segment at residues 1–31 is a signal peptide (tat-type signal); the sequence is MNRRDFLKGIASSSFVVLGGSSVLTPLNALA. Ser180 is a Mo-bis(molybdopterin guanine dinucleotide) binding site.

The protein belongs to the prokaryotic molybdopterin-containing oxidoreductase family. It depends on Mo-bis(molybdopterin guanine dinucleotide) as a cofactor. Post-translationally, predicted to be exported by the Tat system. The position of the signal peptide cleavage has been experimentally proven.

The protein resides in the periplasm. The catalysed reaction is trimethylamine + 2 Fe(III)-[cytochrome c] + H2O = trimethylamine N-oxide + 2 Fe(II)-[cytochrome c] + 3 H(+). In terms of biological role, reduces trimethylamine-N-oxide (TMAO) into trimethylamine; an anaerobic reaction coupled to energy-yielding reactions. This Shewanella massilia protein is Trimethylamine-N-oxide reductase (torA).